A 92-amino-acid polypeptide reads, in one-letter code: SPbeta prophage-derived uncharacterized protein YoqM (92 aa).

An N-terminal signal peptide occupies residues 1-25; it reads MKLRKVLTGSVLSLGLLVSASPAFA.

The protein is SPbeta prophage-derived uncharacterized protein YoqM (yoqM) of Bacillus subtilis (strain 168).